A 212-amino-acid polypeptide reads, in one-letter code: MAESRSPDRGAKEDKPRPRNISREESLQLEGYKHACHALLHAPSQAKLFDRVPIRRVLLMMMRFDGRLGFPGGFVDTRDISLEEGLKRELEEELGPALATVEVTEDDYRSSQVREHPQKCVTHFYIKELKLEEIERIEAEAVNAKDHGLEVMGLIRVPLYTLRDRVGGLPAFLCNNFIGNSKSQLLYALRSLKLLREDQIQEVLKASHRLQY.

Residues 1 to 23 (MAESRSPDRGAKEDKPRPRNISR) are disordered. Substrate is bound by residues His-37, Arg-63, and Phe-70. Residues 39–187 (LLHAPSQAKL…IGNSKSQLLY (149 aa)) form the Nudix hydrolase domain. 4 residues coordinate Mn(2+): Gly-72, Glu-89, Glu-93, and Glu-150. The Nudix box signature appears at 74-95 (FVDTRDISLEEGLKRELEEELG). Substrate-binding residues include Asn-180 and Gln-184.

It belongs to the Nudix hydrolase family. NUDT16 subfamily. Homodimer. Requires Mg(2+) as cofactor. Mn(2+) serves as cofactor. It depends on Co(2+) as a cofactor. Detected in ovary, and at very low levels in epithelial cells (at protein level).

Its subcellular location is the nucleus. It is found in the nucleolus. The protein resides in the nucleoplasm. The protein localises to the cytoplasm. The catalysed reaction is a 5'-end (N(7)-methyl 5'-triphosphoguanosine)-ribonucleoside in mRNA + H2O = N(7)-methyl-GDP + a 5'-end phospho-ribonucleoside in mRNA + 2 H(+). The enzyme catalyses IDP + H2O = IMP + phosphate + H(+). It carries out the reaction dIDP + H2O = dIMP + phosphate + H(+). It catalyses the reaction a 5'-end NAD(+)-phospho-ribonucleoside in mRNA + H2O = a 5'-end phospho-ribonucleoside in mRNA + NAD(+) + H(+). The catalysed reaction is a 5'-end FAD-phospho-ribonucleoside in mRNA + H2O = a 5'-end phospho-adenosine-phospho-ribonucleoside in mRNA + FMN + 2 H(+). The enzyme catalyses a 5'-end CoA-ribonucleoside in mRNA + H2O = a 5'-end phospho-adenosine-phospho-ribonucleoside in mRNA + (R)-4'-phosphopantetheine + 2 H(+). In terms of biological role, RNA-binding and decapping enzyme that catalyzes the cleavage of the cap structure of snoRNAs and mRNAs in a metal-dependent manner. Part of the U8 snoRNP complex that is required for the accumulation of mature 5.8S and 28S rRNA. Has diphosphatase activity and removes m7G and/or m227G caps from U8 snoRNA and leaves a 5'monophosphate on the RNA. Also catalyzes the cleavage of the cap structure on mRNAs. Does not hydrolyze cap analog structures like 7-methylguanosine nucleoside triphosphate (m7GpppG). Also hydrolysis m7G- and m227G U3-capped RNAs but with less efficiencies. Has broad substrate specificity with manganese or cobalt as cofactor and can act on various RNA species. Binds to the U8 snoRNA; metal is not required for RNA-binding. May play a role in the regulation of snoRNAs and mRNAs degradation. Also acts as a phosphatase; hydrolyzes the non-canonical purine nucleotides inosine diphosphate (IDP) and deoxyinosine diphosphate (dITP) as well as guanosine diphosphate (GDP), deoxyguanosine diphosphate (dGDP), xanthine diphosphate (XDP), inosine triphosphate (ITP) and deoxyinosine triphosphate (ITP) to their respective monophosphate derivatives and does not distinguish between the deoxy- and ribose forms. The order of activity with different substrates is IDP &gt; dIDP &gt;&gt; GDP = dGDP &gt; XDP = ITP = dITP. Binds strongly to GTP, ITP and XTP. Participates in the hydrolysis of dIDP/IDP and probably excludes non-canonical purines from RNA and DNA precursor pools, thus preventing their incorporation into RNA and DNA and avoiding chromosomal lesions. Exhibits decapping activity towards NAD-capped RNAs and FAD-capped RNAs. Exhibits decapping activity towards dpCoA-capped RNAs in vitro. The sequence is that of U8 snoRNA-decapping enzyme (nudt16) from Xenopus laevis (African clawed frog).